The following is a 215-amino-acid chain: MNISIFDLSIYIKFFIGLCALVNPIGMIPIFTTMTNNQSFLERKKTNIVANFSVSLILLISLFFGSNILNIFGISINSFRIAGGILIISIAFSMISGQFIKTIKTKKETKEENKIDNISVVPLAMPLIAGPGAISSTIVWSTYYSSWANLFLCSLVIFLFSFVCWLCFEAAPYVVQILGNTGINIITRIMGLLLMSLGIEFISTGIGAIFPGLLH.

6 consecutive transmembrane segments (helical) span residues Phe14 to Met34, Leu56 to Ile76, Ile81 to Lys101, Val120 to Trp140, Leu150 to Ala170, and Ile189 to Ile209.

This sequence belongs to the UPF0056 (MarC) family.

The protein localises to the cell membrane. The protein is UPF0056 membrane protein BU267 of Buchnera aphidicola subsp. Acyrthosiphon pisum (strain APS) (Acyrthosiphon pisum symbiotic bacterium).